Consider the following 360-residue polypeptide: Peptide chain release factor 1 (360 aa).

Position 235 is an N5-methylglutamine (Gln235).

It belongs to the prokaryotic/mitochondrial release factor family. Methylated by PrmC. Methylation increases the termination efficiency of RF1.

It localises to the cytoplasm. Functionally, peptide chain release factor 1 directs the termination of translation in response to the peptide chain termination codons UAG and UAA. The chain is Peptide chain release factor 1 from Janthinobacterium sp. (strain Marseille) (Minibacterium massiliensis).